We begin with the raw amino-acid sequence, 352 residues long: Protein TIFY 6B (352 aa).

The interval methionine 1–serine 71 is disordered. Positions valine 17–arginine 26 are enriched in basic and acidic residues. The segment covering methionine 34–proline 54 has biased composition (polar residues). In terms of domain architecture, Tify spans proline 172–asparagine 207. Positions proline 302 to tyrosine 326 match the Jas motif. The short motif at alanine 304–arginine 311 is the Nuclear localization signal element.

Belongs to the TIFY/JAZ family. Homo- and heterodimer. Interacts with COI1, MYC2, MYC3, MYC4, TIFY10A/JAZ1, TIFY10B/JAZ2, TIFY6A/JAZ4, TIFY5A/JAZ8, TIFY7/JAZ9, TIFY9/JAZ10 and TIFY3A/JAZ11. Interacts (via TIFY domain) with AFPH2/NINJA. In terms of processing, ubiquitinated. Targeted for degradation by the SCF(COI1) E3 ubiquitin ligase-proteasome pathway during jasmonate signaling. Srtongly expressed in root tips.

The protein localises to the nucleus. Its function is as follows. Repressor of jasmonate responses. Jasmonoyl-isoleucine (JA-Ile) specifically promotes COI1-TIFY6B/JAZ3 interaction. Acts as a negative regulator of MYC2 function. Feed-back regulated by MYC2. This is Protein TIFY 6B (TIFY6B) from Arabidopsis thaliana (Mouse-ear cress).